We begin with the raw amino-acid sequence, 149 residues long: Calmodulin (149 aa).

N-acetylalanine is present on Ala-2. 4 EF-hand domains span residues Glu-8–Asn-43, Pro-44–Asp-79, Asp-81–Lys-116, and Leu-117–Lys-149. Residues Asp-21, Asp-23, Asp-25, Thr-27, Glu-32, Asp-57, Asp-59, Asn-61, Thr-63, Glu-68, Asp-94, Asp-96, Asn-98, and Glu-105 each contribute to the Ca(2+) site. Lys-116 carries the post-translational modification N6,N6,N6-trimethyllysine. Ca(2+) is bound by residues Asp-130, Asp-132, Asp-134, Gln-136, and Glu-141.

This sequence belongs to the calmodulin family.

In terms of biological role, calmodulin mediates the control of a large number of enzymes, ion channels and other proteins by Ca(2+). Among the enzymes to be stimulated by the calmodulin-Ca(2+) complex are a number of protein kinases and phosphatases. The polypeptide is Calmodulin (Metridium senile (Brown sea anemone)).